A 270-amino-acid chain; its full sequence is Basigin (270 aa).

The N-terminal stretch at 1-21 is a signal peptide; the sequence is MAAVLFALLALALLRAGGASA. The Ig-like C2-type domain maps to 22–103; that stretch reads AAGTVTTSVQ…TGEATLTVDG (82 aa). The Extracellular portion of the chain corresponds to 22–207; the sequence is AAGTVTTSVQ…VTLRVRSRLA (186 aa). Cystine bridges form between C41–C87 and C126–C185. N-linked (GlcNAc...) asparagine glycosylation is found at N44, N75, N152, and N186. The 99-residue stretch at 105–203 folds into the Ig-like V-type domain; the sequence is PRIKAVKKSE…DAAVVTLRVR (99 aa). Residues 208-228 traverse the membrane as a helical segment; that stretch reads ALWPFLGIVAEVLVLVTVIFI. The Cytoplasmic portion of the chain corresponds to 229–270; it reads YEKRRKPDEVLDDEDAGAAPLKSSGHHVNDDKGKNVRQRNAS. Positions 239–270 are disordered; sequence LDDEDAGAAPLKSSGHHVNDDKGKNVRQRNAS. S252 carries the post-translational modification Phosphoserine.

In terms of assembly, homooligomer. Interacts with VEGFA, KDR/VEGFR2, PPIA/CYPA, SLC1A3, SLC16A12, SLC16A11, ATP1B2, MAG, L1CAM and AJAP1. Interacts with PPIL2; regulates BSG transport to the cell membrane. Interacts with XKR8; promoting its localization at the cell membrane. Interacts with SLC16A3; interaction mediates SLC16A3 targeting to the plasma membrane. Interacts with SLC16A1; interaction mediates SLC16A1 targeting to the plasma membrane. Interacts with SLC16A6; this interaction mediates targeting to the plasma membrane.

The protein localises to the cell membrane. Its subcellular location is the endoplasmic reticulum membrane. The protein resides in the basolateral cell membrane. In terms of biological role, signaling receptor for cyclophilins, essential for PPIA/CYPA and PPIB/CYPB-dependent signaling related to chemotaxis and adhesion of immune cells. Plays an important role in targeting the monocarboxylate transporters SLC16A1/GLUT1, SLC16A3, SLC16A8, SLC16A11 and SLC16A12 to the plasma membrane. Acts as a coreceptor for vascular endothelial growth factor receptor 2 (KDR/VEGFR2) in endothelial cells enhancing its VEGFA-mediated activation and downstream signaling. Promotes angiogenesis through EPAS1/HIF2A-mediated up-regulation of VEGFA and KDR/VEGFR2 in endothelial cells. In Oryctolagus cuniculus (Rabbit), this protein is Basigin (BSG).